A 255-amino-acid chain; its full sequence is Proteasome subunit alpha 2 (255 aa).

A disordered region spans residues 229-255 (AGSSLEEMLPTPAATEDAPPANGDAPS). Low complexity predominate over residues 238–249 (PTPAATEDAPPA).

It belongs to the peptidase T1A family. The 20S proteasome core is composed of 14 alpha and 14 beta subunits that assemble into four stacked heptameric rings, resulting in a barrel-shaped structure. The two inner rings, each composed of seven catalytic beta subunits, are sandwiched by two outer rings, each composed of seven alpha subunits. All four combinations of alpha- and beta-subunits (beta2-alpha1, beta2-alpha2, beta1-alpha2 and beta1-alpha1) yield fully assembled and proteolytically active proteasomes. The catalytic chamber with the active sites is on the inside of the barrel. Has probably a gated structure, the ends of the cylinder being occluded by the N-termini of the alpha-subunits. Is likely capped by the proteasome-associated ATPase, ARC. Post-translationally, the N-terminus is blocked.

Its subcellular location is the cytoplasm. The protein operates within protein degradation; proteasomal Pup-dependent pathway. The formation of the proteasomal ATPase ARC-20S proteasome complex, likely via the docking of the C-termini of ARC into the intersubunit pockets in the alpha-rings, may trigger opening of the gate for substrate entry. Interconversion between the open-gate and close-gate conformations leads to a dynamic regulation of the 20S proteasome proteolysis activity. Component of the proteasome core, a large protease complex with broad specificity involved in protein degradation. The R.erythropolis proteasomes are able to cleave oligopeptides after Tyr, Phe and Leu, very poorly after Arg but not after Glu. Thus, displays chymotrypsin-like activity, low trypsin-like activity but no caspase-like activity. This Rhodococcus erythropolis (Arthrobacter picolinophilus) protein is Proteasome subunit alpha 2.